A 225-amino-acid polypeptide reads, in one-letter code: 3-dehydroquinate dehydratase (225 aa).

3-dehydroquinate-binding positions include Ser-6, Glu-30 to Arg-32, and Arg-62. The active-site Proton donor/acceptor is His-118. Lys-143 functions as the Schiff-base intermediate with substrate in the catalytic mechanism. 3-dehydroquinate-binding residues include Arg-186, Ser-205, and Gln-209.

This sequence belongs to the type-I 3-dehydroquinase family. In terms of assembly, homodimer.

It carries out the reaction 3-dehydroquinate = 3-dehydroshikimate + H2O. Its pathway is metabolic intermediate biosynthesis; chorismate biosynthesis; chorismate from D-erythrose 4-phosphate and phosphoenolpyruvate: step 3/7. Its function is as follows. Involved in the third step of the chorismate pathway, which leads to the biosynthesis of aromatic amino acids. Catalyzes the cis-dehydration of 3-dehydroquinate (DHQ) and introduces the first double bond of the aromatic ring to yield 3-dehydroshikimate. The polypeptide is 3-dehydroquinate dehydratase (Streptococcus pneumoniae (strain P1031)).